A 2555-amino-acid chain; its full sequence is Ubiquitin carboxyl-terminal hydrolase 9Y (2555 aa).

Residues 1–66 (MTAITHGSPV…APPQHEDEEP (66 aa)) form a disordered region. Polar residues predominate over residues 13-45 (NDSQGQVLDGQSQHLFQQNQTSSPDSSNENSVA). Position 589 is a phosphoserine (serine 589). Threonine 591 is modified (phosphothreonine). A disordered region spans residues 972 to 997 (NMPSSPDSSSDSSTASPGNHRNHYND). The segment covering 974 to 984 (PSSPDSSSDSS) has biased composition (low complexity). The 400-residue stretch at 1559–1958 (VGLKNAGATC…NAYILFYEQM (400 aa)) folds into the USP domain. The active-site Nucleophile is the cysteine 1568. Residues cysteine 1729, histidine 1731, cysteine 1773, and cysteine 1776 each coordinate Zn(2+). Catalysis depends on histidine 1881, which acts as the Proton acceptor. Serine 2444 is subject to Phosphoserine. Acidic residues predominate over residues 2476 to 2485 (PEEEPDDQDA). The segment at 2476-2555 (PEEEPDDQDA…EVSSPQMKDQ (80 aa)) is disordered. 2 stretches are compositionally biased toward polar residues: residues 2504-2514 (PASQYQQNNHV) and 2528-2555 (NNPQ…MKDQ). Position 2541 is a phosphotyrosine (tyrosine 2541). Serine 2548 is subject to Phosphoserine.

This sequence belongs to the peptidase C19 family. As to expression, widely expressed in embryonic and adult tissues.

It carries out the reaction Thiol-dependent hydrolysis of ester, thioester, amide, peptide and isopeptide bonds formed by the C-terminal Gly of ubiquitin (a 76-residue protein attached to proteins as an intracellular targeting signal).. Its pathway is protein modification; protein ubiquitination. Deubiquitinase that mediates deubiquitination of target proteins. May stabilize target proteins that are important for male germ cell development. This Homo sapiens (Human) protein is Ubiquitin carboxyl-terminal hydrolase 9Y.